Here is a 190-residue protein sequence, read N- to C-terminus: Cytidylate kinase (190 aa).

Residue 7–15 coordinates ATP; that stretch reads GKIGSGKST.

It belongs to the cytidylate kinase family. Type 2 subfamily.

It localises to the cytoplasm. It catalyses the reaction CMP + ATP = CDP + ADP. It carries out the reaction dCMP + ATP = dCDP + ADP. In Thermoplasma volcanium (strain ATCC 51530 / DSM 4299 / JCM 9571 / NBRC 15438 / GSS1), this protein is Cytidylate kinase.